Consider the following 344-residue polypeptide: Homoserine O-acetyltransferase (344 aa).

The active-site Acyl-thioester intermediate is C142. 2 residues coordinate substrate: K163 and S192. H235 acts as the Proton acceptor in catalysis. E237 is a catalytic residue. R249 lines the substrate pocket.

This sequence belongs to the MetA family.

The protein resides in the cytoplasm. It carries out the reaction L-homoserine + acetyl-CoA = O-acetyl-L-homoserine + CoA. It participates in amino-acid biosynthesis; L-methionine biosynthesis via de novo pathway; O-acetyl-L-homoserine from L-homoserine: step 1/1. In terms of biological role, transfers an acetyl group from acetyl-CoA to L-homoserine, forming acetyl-L-homoserine. This chain is Homoserine O-acetyltransferase, found in Bifidobacterium adolescentis (strain ATCC 15703 / DSM 20083 / NCTC 11814 / E194a).